The chain runs to 588 residues: Calicin (588 aa).

The 71-residue stretch at W28–E98 folds into the BTB domain. Residues C133–F235 form the BACK domain. Residue S149 is modified to Phosphoserine. Kelch repeat units lie at residues S280 to R327, Y328 to G375, V377 to D423, N425 to Q475, D476 to S525, and K526 to L580.

Interacts with CYLC1; the interaction may be relevant for proper acrosome attachment to the nuclear envelope. As to expression, expressed in testis and in spermatozoa.

The protein resides in the cytoplasm. Its subcellular location is the cytoskeleton. The protein localises to the perinuclear theca. It localises to the calyx. Its function is as follows. Required for both nuclear and acrosomal shaping during spermiogenesis. This Mus musculus (Mouse) protein is Calicin (Ccin).